The sequence spans 223 residues: uncharacterized protein (223 aa).

The segment at 117 to 148 (THAHTHAHTHGHTHTRAHSTHAHTHAHSHYHT) is disordered.

This is an uncharacterized protein from Homo sapiens (Human).